The primary structure comprises 122 residues: NADH-quinone oxidoreductase subunit A (122 aa).

Helical transmembrane passes span 10 to 30 (MIVG…LTLG), 66 to 86 (IFAL…PWAV), and 91 to 111 (LGLF…IGLA).

This sequence belongs to the complex I subunit 3 family. As to quaternary structure, NDH-1 is composed of 14 different subunits. Subunits NuoA, H, J, K, L, M, N constitute the membrane sector of the complex.

It is found in the cell membrane. It catalyses the reaction a quinone + NADH + 5 H(+)(in) = a quinol + NAD(+) + 4 H(+)(out). Functionally, NDH-1 shuttles electrons from NADH, via FMN and iron-sulfur (Fe-S) centers, to quinones in the respiratory chain. The immediate electron acceptor for the enzyme in this species is believed to be a menaquinone. Couples the redox reaction to proton translocation (for every two electrons transferred, four hydrogen ions are translocated across the cytoplasmic membrane), and thus conserves the redox energy in a proton gradient. The chain is NADH-quinone oxidoreductase subunit A from Bacillus cytotoxicus (strain DSM 22905 / CIP 110041 / 391-98 / NVH 391-98).